Consider the following 145-residue polypeptide: Leptin (145 aa).

Cysteines 95 and 145 form a disulfide.

The protein belongs to the leptin family.

The protein resides in the secreted. Its function is as follows. Key player in the regulation of energy balance and body weight control. Once released into the circulation, has central and peripheral effects by binding LEPR, found in many tissues, which results in the activation of several major signaling pathways. In Meleagris gallopavo (Wild turkey), this protein is Leptin (LEP).